Consider the following 177-residue polypeptide: MSELTTIARPYAKAAFDFAIEQSAVEKWTEMLGFAAAVAEDETVKAYLSSSLSAQKLADTVISICGEQLDQYGQNLIRLMAENKRLSAIPAVFEEFKHHVEEHQAIAEVEVTSAQPLNATQIEKIAAAMEKRLARKVKLNCNVDNALIAGVIIRTEDFVIDGSSRGQLTRLANELQL.

It belongs to the ATPase delta chain family. In terms of assembly, F-type ATPases have 2 components, F(1) - the catalytic core - and F(0) - the membrane proton channel. F(1) has five subunits: alpha(3), beta(3), gamma(1), delta(1), epsilon(1). F(0) has three main subunits: a(1), b(2) and c(10-14). The alpha and beta chains form an alternating ring which encloses part of the gamma chain. F(1) is attached to F(0) by a central stalk formed by the gamma and epsilon chains, while a peripheral stalk is formed by the delta and b chains.

The protein resides in the cell inner membrane. Its function is as follows. F(1)F(0) ATP synthase produces ATP from ADP in the presence of a proton or sodium gradient. F-type ATPases consist of two structural domains, F(1) containing the extramembraneous catalytic core and F(0) containing the membrane proton channel, linked together by a central stalk and a peripheral stalk. During catalysis, ATP synthesis in the catalytic domain of F(1) is coupled via a rotary mechanism of the central stalk subunits to proton translocation. This protein is part of the stalk that links CF(0) to CF(1). It either transmits conformational changes from CF(0) to CF(1) or is implicated in proton conduction. In Haemophilus influenzae (strain PittEE), this protein is ATP synthase subunit delta.